Consider the following 231-residue polypeptide: DNA mismatch repair protein MutH (231 aa).

Belongs to the MutH family.

It is found in the cytoplasm. Functionally, sequence-specific endonuclease that cleaves unmethylated GATC sequences. It is involved in DNA mismatch repair. The polypeptide is DNA mismatch repair protein MutH (Klebsiella pneumoniae (strain 342)).